The sequence spans 249 residues: Long form salivary protein D7L (249 aa).

Residues 1–19 form the signal peptide; the sequence is MNAVITSLVFISLVGVGYS. 2 disulfides stabilise this stretch: Cys36-Cys66 and Cys62-Cys112. Position 49 (Trp49) interacts with thromboxane A2. Position 52 (Trp52) interacts with leukotriene C4. Thromboxane A2 is bound at residue Tyr63. The leukotriene C4 site is built by Gly136 and Lys154. Thromboxane A2 is bound at residue Lys154. Intrachain disulfides connect Cys162/Cys178, Cys174/Cys221, and Cys211/Cys230.

The protein belongs to the PBP/GOBP family.

It is found in the secreted. In terms of biological role, modulates blood feeding of female sandflies on vertebrate species by binding and sequestering different mediators involved in the host response. Binds leukotriene C4, leukotriene D4, leukotriene E4 and U-46619, a stable analog of thromboxane A2. Does not bind histamine or serotonin. Inhibits platelet aggregation induced by low concentrations of collagen in thromboxane A2-dependent manner. The protein is Long form salivary protein D7L of Phlebotomus duboscqi (Sandfly).